We begin with the raw amino-acid sequence, 204 residues long: MVWAWQQWLSPRPQKRTKNTSQVAFYTSENAALYEPLSKPDGNWYVRETHFRENPNVRAGLTGPPLHLHLQQDEYFKVEQGVLGAVKDGVEVAITKNDPVLHIPRGTRHRFWPHPSSTEDLVFTAWADPCKDHDHILDLNFLRNLAGYLADCDSEGLQPSPFQLILFFHEASSILCPPFLNWMPLWLLIWVHNGLAWIAREFLG.

It belongs to the oxidoreductase OpS7 family.

The protein operates within secondary metabolite biosynthesis. Oxidoreductase; part of the gene cluster that mediates the biosynthesis of iso-A82775C, a enylepoxycyclohexane and biosynthetic precursor of the chloropestolide anticancer natural products. Within the cluster, the prenyltransferase iacE prenylates siccayne to generate pestalodiol E, using dimethylallyl diphosphate (DMAPP) as cosubstrate. The probable oxidoreductase iacF is then involved in the epoxidation of pestalodiol F to pestalodiol F, which is further converted to pestalofone A by the short-chain dehydrogenase/reductase iacG. Iso-A82775C is subsequently generated from pestalofone A by the short-chain dehydrogenase/reductase iacC. Iso-A82775C is further condensed with maldoxin via a Diels-Alder reaction to produce the anticancer natural products chloropestolides A to E. This is Oxidoreductase iacF from Pestalotiopsis fici (strain W106-1 / CGMCC3.15140).